The sequence spans 588 residues: MHPLRCVLQVQRLSAPFTSMCWVLLRTCRAQSSVSSTPCPSPEAKSSEAQKDFSSRLATGPTFQHFLRSASVPQEKPSSPEVEDPPPYLSGDELLGRQRKVYLETYGCQMNVNDTEIAWSILQKSGYLRTSNLQEADVILLVTCSIREKAEQTIWNRLHQLKVLKTKRPRSRVPLRIGILGCMAERLKGEILNREKMVDLLAGPDAYRDLPRLLAVVESGQQAANVLLSLDETYADIMPVQTSPSATSAFVSIMRGCDNMCSYCIVPFTRGRERSRPVASILDEVRKLSEQGLKEVTLLGQNVNSFRDNSEVQFNNAGSANLSRGFTTNYKPKQGGLRFSHLLDQVSRIDPEMRIRFTSPHPKDFPDEVLQLIRERHNICKQIHLPAQSGSSRVLDAMRRGYSREAYVALVHHVRETIPGVSLSSDFITGFCGETEDDHRQTVSLLREVQYNTGFLFAYSMRQKTRAYHRLKDDVPEEVKLRRLEELITVFREEASKANKTSVGCSQLVLVEGFSKRSTTDLCGRNDANLKVIFPDAEVEDITNPGLKVRAQPGDYVLVKITSASSQTLKGHILCRTTMKDSLTYCTT.

The transit peptide at 1-30 (MHPLRCVLQVQRLSAPFTSMCWVLLRTCRA) directs the protein to the mitochondrion. 2 disordered regions span residues 33-53 (SVSS…QKDF) and 70-91 (ASVP…YLSG). One can recognise an MTTase N-terminal domain in the interval 99–219 (RKVYLETYGC…LPRLLAVVES (121 aa)). The [4Fe-4S] cluster site is built by C108, C144, C182, C257, C261, and C264. The Radical SAM core domain maps to 243-498 (SPSATSAFVS…TVFREEASKA (256 aa)). Residues 500-575 (KTSVGCSQLV…SQTLKGHILC (76 aa)) form the TRAM domain.

This sequence belongs to the methylthiotransferase family. MiaB subfamily. As to quaternary structure, interacts with CDK5R1 (p35 form). CDK5RAP1, CDK5RAP2 and CDK5RAP3 show competitive binding to CDK5R1. Probably forms a complex with CDK5R1 and CDK5. [4Fe-4S] cluster is required as a cofactor. Expressed in brain, liver, skeletal muscle and heart.

The protein resides in the mitochondrion. The catalysed reaction is N(6)-dimethylallyladenosine(37) in tRNA + (sulfur carrier)-SH + AH2 + 2 S-adenosyl-L-methionine = 2-methylsulfanyl-N(6)-dimethylallyladenosine(37) in tRNA + (sulfur carrier)-H + 5'-deoxyadenosine + L-methionine + A + S-adenosyl-L-homocysteine + 2 H(+). In terms of biological role, methylthiotransferase that catalyzes the conversion of N6-(dimethylallyl)adenosine (i(6)A) to 2-methylthio-N6-(dimethylallyl)adenosine (ms(2)i(6)A) at position 37 (adjacent to the 3'-end of the anticodon) of four mitochondrial DNA-encoded tRNAs (Ser(UCN), Phe, Tyr and Trp). Essential for efficient and highly accurate protein translation by the ribosome. Specifically inhibits CDK5 activation by CDK5R1. Essential for efficient mitochondrial protein synthesis and respiratory chain. The protein is Mitochondrial tRNA methylthiotransferase CDK5RAP1 of Mus musculus (Mouse).